We begin with the raw amino-acid sequence, 399 residues long: Lymphoid enhancer-binding factor 1 (399 aa).

Positions 1-14 are enriched in gly residues; it reads MPQLSGGGGGGGGD. The CTNNB1-binding stretch occupies residues 1 to 62; that stretch reads MPQLSGGGGG…IKSSLVNESE (62 aa). The disordered stretch occupies residues 1-104; sequence MPQLSGGGGG…KHPDGGLYNK (104 aa). Basic and acidic residues-rich tracts occupy residues 24–45 and 82–98; these read IPFK…SHPE and PYHD…KHPD. Lys27 is covalently cross-linked (Glycyl lysine isopeptide (Lys-Gly) (interchain with G-Cter in SUMO)). Position 132 is a phosphoserine (Ser132). Residue Thr155 is modified to Phosphothreonine; by NLK. Ser166 carries the phosphoserine; by NLK modification. 2 disordered regions span residues 166–192 and 268–298; these read SPGS…PAPD and VKQE…KRPH. Lys269 is covalently cross-linked (Glycyl lysine isopeptide (Lys-Gly) (interchain with G-Cter in SUMO)). Basic and acidic residues predominate over residues 269 to 296; the sequence is KQEHPHTDSDLMHVKPQHEQRKEQEPKR. The HMG box DNA-binding region spans 299 to 367; it reads IKKPLNAFML…LHMQLYPGWS (69 aa). The tract at residues 369–399 is disordered; sequence RDNYGKKKKRKREKLQESASGTGPRMTAAYI.

It belongs to the TCF/LEF family. Binds the armadillo repeat of CTNNB1 and forms a stable complex. Interacts with EP300, TLE1 and PIASG. Binds ALYREF/THOC4, MDFI and MDFIC. Interacts with NLK. Interacts with DAZAP2. In terms of processing, phosphorylated at Thr-155 and/or Ser-166 by NLK. Phosphorylation by NLK at these sites represses LEF1-mediated transcriptional activation of target genes of the canonical Wnt signaling pathway. Detected in thymus. Not detected in normal colon, but highly expressed in colon cancer biopsies and colon cancer cell lines. Expressed in several pancreatic tumors and weakly expressed in normal pancreatic tissue. Isoforms 1 and 5 are detected in several pancreatic cell lines.

It is found in the nucleus. Transcription factor that binds DNA in a sequence-specific manner. Participates in the Wnt signaling pathway. Activates transcription of target genes in the presence of CTNNB1 and EP300. PIAG antagonizes both Wnt-dependent and Wnt-independent activation by LEF1. TLE1, TLE2, TLE3 and TLE4 repress transactivation mediated by LEF1 and CTNNB1. Regulates T-cell receptor alpha enhancer function. Required for IL17A expressing gamma-delta T-cell maturation and development, via binding to regulator loci of BLK to modulate expression. Acts as a positive regulator of odontoblast differentiation during mesenchymal tooth germ formation, expression is repressed during the bell stage by MSX1-mediated inhibition of CTNNB1 signaling. May play a role in hair cell differentiation and follicle morphogenesis. Its function is as follows. Transcriptionally activates MYC and CCND1 expression and enhances proliferation of pancreatic tumor cells. In terms of biological role, lacks the CTNNB1 interaction domain and may therefore be an antagonist for Wnt signaling. Functionally, transcriptionally activates the fibronectin promoter, binds to and represses transcription from the E-cadherin promoter in a CTNNB1-independent manner, and is involved in reducing cellular aggregation and increasing cell migration of pancreatic cancer cells. The chain is Lymphoid enhancer-binding factor 1 from Homo sapiens (Human).